Reading from the N-terminus, the 362-residue chain is Protein Tob1 (362 aa).

The Bipartite nuclear localization signal motif lies at 22–39 (RRRVNIFGEELERLLKKK). Residues 82–92 (VRGNLPQDLSV) are important for nuclear localization. The span at 144 to 160 (DPASSVSSSPSPPFGHS) shows a compositional bias: low complexity. The segment at 144–171 (DPASSVSSSPSPPFGHSAAVSPTFMPRS) is disordered. Positions 161 to 220 (AAVSPTFMPRSTQPLTFTTATFAATKFGSTKMKNSGRSSKVARTSPINLGLTVNVNDLLK) are required for interaction with CPEB3. Thr-204 is subject to Phosphothreonine. A Nuclear export signal motif is present at residues 228–236 (VHSLYGLGL). Positions 234 to 284 (LGLGSQQQPQPQPQQQQQQQPSSSQPPPPLPQQQQQQPQQQQQQQQQTSAL) are disordered. Composition is skewed to low complexity over residues 238–256 (SQQQ…QPSS) and 265–280 (QQQQ…QQQQ).

The protein belongs to the BTG family. As to quaternary structure, interacts with ERBB2. Interacts with CNOT7. Interacts with CPEB3 (via C-terminal RNA-binding region); recruits CNOT7 to CPEB3 to form a ternary complex required for mRNA deadenylation and decay. Interacts with CNOT8. Interacts with CPEB4. Phosphorylated on Ser and Thr residues. As to expression, ubiquitous.

Its subcellular location is the cytoplasm. It localises to the nucleus. Anti-proliferative protein; the function is mediated by association with deadenylase subunits of the CCR4-NOT complex. Mediates CPEB3-accelerated mRNA deadenylation by binding to CPEB3 and recruiting CNOT7 which leads to target mRNA deadenylation and decay. This chain is Protein Tob1 (Tob1), found in Mus musculus (Mouse).